The primary structure comprises 526 residues: Thioredoxin reductase 2, mitochondrial (526 aa).

A mitochondrion-targeting transit peptide spans 1–36 (MAAIVAALRGSSGRFRPQTRVLTRGTRGAAGAASAA). 43-72 (DLLVIGGGSGGLACAKEAAQLGRKVAVADY) is a binding site for FAD. Lys-81 carries the N6-succinyllysine modification. Cys-88 and Cys-93 are oxidised to a cystine. N6-succinyllysine occurs at positions 177 and 331. His-499 (proton acceptor) is an active-site residue. Residues 524 to 525 (CU) constitute a cross-link (cysteinyl-selenocysteine (Cys-Sec)). Residue Sec-525 is a non-standard amino acid, selenocysteine.

This sequence belongs to the class-I pyridine nucleotide-disulfide oxidoreductase family. In terms of assembly, homodimer. FAD is required as a cofactor. As to expression, expressed in liver, kidney, adrenal gland and heart.

Its subcellular location is the mitochondrion. It catalyses the reaction [thioredoxin]-dithiol + NADP(+) = [thioredoxin]-disulfide + NADPH + H(+). Its function is as follows. Involved in the control of reactive oxygen species levels and the regulation of mitochondrial redox homeostasis. Maintains mitochondrial thioredoxin in a reduced state. May play a role in redox-regulated cell signaling. In Rattus norvegicus (Rat), this protein is Thioredoxin reductase 2, mitochondrial (Txnrd2).